The primary structure comprises 1593 residues: ABC transporter C family member 8 (1593 aa).

10 consecutive transmembrane segments (helical) span residues 27–47, 75–95, 100–120, 135–155, 169–189, 280–300, 318–338, 392–412, 419–439, and 505–525; these read VVMTLPAIYLLIFGMKRLYYL, VIVSILLVAWKILFFIVIVSI, FEILYSVVTVVQWTVSLGLVY, LYWVFAFFVATVKLRTLTLAI, FSYFVGYCLILILSITSVLFF, FYIAALFKIIQDLLIFVGPTL, YDGLIYALLYFLAPVVQSLLL, LCPYLHMIWSAPLQLAISLVL, ASVFAGLGIMLVMIPINLAIS, and LLLWSMSPVFVSVSTFTVYIL. The ABC transmembrane type-1 1 domain occupies 280-561; that stretch reads FYIAALFKII…LPSVVSSIIE (282 aa). Residues 594–818 form the ABC transporter 1 domain; that stretch reads VKIDNATLEW…GSHFTELMSH (225 aa). Position 627–634 (627–634) interacts with ATP; it reads GQVGSGKS. The interval 816 to 938 is disordered; the sequence is MSHDEQQQQL…PLQKGEKSSV (123 aa). Residues 844-875 are a coiled coil; it reads GDNKESENNEEQNEEEEGENENLLEKVLRKSR. Residues 851–865 are compositionally biased toward acidic residues; it reads NNEEQNEEEEGENEN. The segment covering 877–886 has biased composition (low complexity); it reads RSPSPSSNRN. Positions 905–922 are enriched in acidic residues; the sequence is EEDEQDERELMEDIDIDG. 5 helical membrane passes run 1005-1025, 1064-1084, 1157-1177, 1251-1271, and 1280-1300; these read IGVLLATCIIGFYVLTQLLSI, AKYYLSIYVAFSCGTIAATFL, IIVIAWVSPFIILAMVPVGAL, LAIRLEFLGACLVSCAVLYTV, and GTAGLVITYALAITGNMNWMV. The ABC transmembrane type-1 2 domain maps to 1010–1308; that stretch reads ATCIIGFYVL…MVRMSCDLEN (299 aa). An ABC transporter 2 domain is found at 1344-1578; it reads IVFKNLWLTY…QDSIYYSLVK (235 aa). 1378-1385 provides a ligand contact to ATP; the sequence is GRTGAGKS.

Belongs to the ABC transporter superfamily. ABCC family. Conjugate transporter (TC 3.A.1.208) subfamily.

The protein resides in the membrane. The sequence is that of ABC transporter C family member 8 (abcC8) from Dictyostelium discoideum (Social amoeba).